Consider the following 211-residue polypeptide: Large ribosomal subunit protein uL4 (211 aa).

The interval 63-94 (RFGRQKGGGTARHGARSAPQFVGGGKAHGPRV) is disordered.

Belongs to the universal ribosomal protein uL4 family. As to quaternary structure, part of the 50S ribosomal subunit.

Its function is as follows. One of the primary rRNA binding proteins, this protein initially binds near the 5'-end of the 23S rRNA. It is important during the early stages of 50S assembly. It makes multiple contacts with different domains of the 23S rRNA in the assembled 50S subunit and ribosome. In terms of biological role, forms part of the polypeptide exit tunnel. This is Large ribosomal subunit protein uL4 from Maricaulis maris (strain MCS10) (Caulobacter maris).